Here is a 434-residue protein sequence, read N- to C-terminus: GTPase Obg (434 aa).

One can recognise an Obg domain in the interval 4-162; sequence ADFIDRIVIY…RKLVLELKLL (159 aa). Residues 163–333 enclose the OBG-type G domain; that stretch reads ADVGLVGYPN…IVYKLAEIVK (171 aa). GTP is bound by residues 169 to 176, 194 to 198, 215 to 218, 285 to 288, and 314 to 316; these read GYPNVGKS, FTTTI, DIPG, NKID, and SII. Residues S176 and T196 each contribute to the Mg(2+) site. One can recognise an OCT domain in the interval 355–434; it reads LWKELPERFN…VAQRAFEYKE (80 aa).

It belongs to the TRAFAC class OBG-HflX-like GTPase superfamily. OBG GTPase family. In terms of assembly, monomer. Requires Mg(2+) as cofactor.

The protein resides in the cytoplasm. An essential GTPase which binds GTP, GDP and possibly (p)ppGpp with moderate affinity, with high nucleotide exchange rates and a fairly low GTP hydrolysis rate. Plays a role in control of the cell cycle, stress response, ribosome biogenesis and in those bacteria that undergo differentiation, in morphogenesis control. The protein is GTPase Obg of Thermosipho africanus (strain TCF52B).